The sequence spans 484 residues: Protein arginine methyltransferase NDUFAF7 homolog, mitochondrial (484 aa).

The N-terminal 12 residues, 1 to 12, are a transit peptide targeting the mitochondrion; it reads MFRSITQRVIRN.

Belongs to the NDUFAF7 family. In terms of assembly, homodimer. Interacts with ndufs2.

The protein localises to the mitochondrion. The enzyme catalyses L-arginyl-[protein] + 2 S-adenosyl-L-methionine = N(omega),N(omega)'-dimethyl-L-arginyl-[protein] + 2 S-adenosyl-L-homocysteine + 2 H(+). Functionally, involved in the assembly or stability of mitochondrial NADH:ubiquinone oxidoreductase complex (complex I). Acts as an arginine methyltransferase and probably acts by mediating arginine methylation of ndufs2. The chain is Protein arginine methyltransferase NDUFAF7 homolog, mitochondrial from Dictyostelium discoideum (Social amoeba).